A 377-amino-acid polypeptide reads, in one-letter code: uncharacterized protein (377 aa).

Disordered stretches follow at residues 10–79 (YSDG…NVNN), 91–141 (KKNN…DKEE), 182–257 (EAKK…TTTT), 265–284 (ENENQEKENNDNDNDNEPIE), and 289–326 (LEFNKFEEKPIKEVKVNTASSNKRNKKRNNPKKVKEEP). Low complexity-rich tracts occupy residues 14–24 (IPQPTITPPTQ), 46–79 (NKNNRNNKNNVDNNNNNNNNNNNNEKQNQTNVNN), and 93–124 (NNNNNNNNNNNNNNNNNNNNNNKNKYNKFNDN). 2 stretches are compositionally biased toward basic and acidic residues: residues 182–196 (EAKKKEEEDARKRGE) and 209–218 (QTPDKKKKLE). Residues 221–257 (TSKNNNKSSTTKTELTNTTTNTSSTTNPTTDTTTTTT) are compositionally biased toward low complexity. Basic and acidic residues-rich tracts occupy residues 265 to 274 (ENENQEKENN) and 292 to 303 (NKFEEKPIKEVK). Over residues 311–320 (KRNKKRNNPK) the composition is skewed to basic residues.

This is an uncharacterized protein from Dictyostelium discoideum (Social amoeba).